The primary structure comprises 180 residues: Transcription factor HES-7.1-B (180 aa).

Positions 13–70 (HRKLLKPLVEKRRRERINNSLEKLRIFLSQTLKSEKLKNPKVEKAEILECTVQFLQSR) constitute a bHLH domain. An Orange domain is found at 84–116 (YQSGFQHCLETTLHFMNSKPDMNGVTKELLSHQ). The WRPW motif motif lies at 176–179 (WRPW).

Transcription repression requires formation of a complex with a corepressor protein of the Groucho/TLE family. In terms of tissue distribution, expressed in the presumptive midbrain-hindbrain boundary (MHB) as early as the early gastrula stage (stage 10.5). Expression in the MHB continues through to tailbud stage. Also transiently expressed in the eye anlage at late neurula stage.

It is found in the nucleus. Its function is as follows. Transcriptional repressor. Represses transcription from both N box- and E box-containing promoters. Demarcates the prospective midbrain-hindbrain boundary (MHB) region in the neuroectoderm in early gastrulae embryos by repressing transcription of a number of target genes. This chain is Transcription factor HES-7.1-B (hes7.1-b), found in Xenopus laevis (African clawed frog).